Here is a 60-residue protein sequence, read N- to C-terminus: CLISPTVQNGNVLSFFCFVEENNCPEGFKCCPLTNVTHPPNKAHKGCCAKYRGTVEKPKQ.

The protein belongs to the scutigerotoxin-02 family. In terms of processing, contains 3 disulfide bonds. Expressed by the venom gland.

Its subcellular location is the secreted. The polypeptide is U-scutigerotoxin(02)-Tl4a (Thereuopoda longicornis (Long-legged centipede)).